Consider the following 239-residue polypeptide: ATP synthase subunit a, chloroplastic (239 aa).

The next 5 membrane-spanning stretches (helical) occupy residues 30 to 50, 87 to 107, 126 to 146, 191 to 211, and 212 to 232; these read VLLVSWVAIIILLLLAILGTF, VPFISTLFLFIFVSNWLGALV, INTTVALAMLTSVSYFYAGLS, LVVAVFNLLFPLFLPLPVMVL, and GLFASSIQALIFATLSASYIG.

The protein belongs to the ATPase A chain family. As to quaternary structure, F-type ATPases have 2 components, CF(1) - the catalytic core - and CF(0) - the membrane proton channel. CF(1) has five subunits: alpha(3), beta(3), gamma(1), delta(1), epsilon(1). CF(0) has four main subunits: a, b, b' and c.

It localises to the plastid. The protein localises to the chloroplast thylakoid membrane. Key component of the proton channel; it plays a direct role in the translocation of protons across the membrane. The chain is ATP synthase subunit a, chloroplastic from Cyanidium caldarium (Red alga).